We begin with the raw amino-acid sequence, 202 residues long: Transcription factor IBH1 (202 aa).

Pro residues predominate over residues Met1–Asn16. Residues Met1 to Arg33 form a disordered region. The region spanning Thr136–Leu185 is the bHLH domain.

This sequence belongs to the bHLH protein family. Interacts with ILI1. Binds to ILI5/BUL1 and BC1. Interacts with BCL1 and BCL2. Highly expressed in roots and at lower levels in leaf blades, leaf sheaths, lamina joint, stems and panicles.

Atypical and probable non DNA-binding bHLH transcription factor that acts as a negative regulator of cell elongation and plant development. Binds the transcription factor ILI1 and forms a heterodimer of antagonistic bHLH transcription factors that function downstream of BZR1 to mediate brassinosteroid regulation of cell elongation and lamina inclination. In Oryza sativa subsp. japonica (Rice), this protein is Transcription factor IBH1.